The sequence spans 183 residues: Peptide deformylase (183 aa).

Fe cation-binding residues include cysteine 110 and histidine 153. Residue glutamate 154 is part of the active site. Histidine 157 is a Fe cation binding site.

It belongs to the polypeptide deformylase family. The cofactor is Fe(2+).

The catalysed reaction is N-terminal N-formyl-L-methionyl-[peptide] + H2O = N-terminal L-methionyl-[peptide] + formate. Removes the formyl group from the N-terminal Met of newly synthesized proteins. Requires at least a dipeptide for an efficient rate of reaction. N-terminal L-methionine is a prerequisite for activity but the enzyme has broad specificity at other positions. This chain is Peptide deformylase, found in Listeria welshimeri serovar 6b (strain ATCC 35897 / DSM 20650 / CCUG 15529 / CIP 8149 / NCTC 11857 / SLCC 5334 / V8).